Consider the following 261-residue polypeptide: TM2 domain-containing protein 3 (261 aa).

Positions 1–44 (MEAAAEPLRSVRHLSRVLLFLSQCYILSGDGSLNLEHSQPLAQA) are cleaved as a signal peptide. The Extracellular segment spans residues 45–193 (IKDPGPTRTF…RTFPKLLYCN (149 aa)). Residues N101, N136, N154, N171, N183, and N193 are each glycosylated (N-linked (GlcNAc...) asparagine). A helical transmembrane segment spans residues 194 to 214 (WTGGYKWSTALALSITLGGFG). Residues 197-244 (GYKWSTALALSITLGGFGADRFYLGQWREGLGKLFSFGGLGIWTLIDV) form the TM2 domain. The Cytoplasmic segment spans residues 215–229 (ADRFYLGQWREGLGK). The chain crosses the membrane as a helical span at residues 230–250 (LFSFGGLGIWTLIDVLLIGVG). Over 251 to 261 (YVGPADGSLYI) the chain is Extracellular.

It belongs to the TM2 family.

The protein resides in the membrane. The protein is TM2 domain-containing protein 3 (Tm2d3) of Mus musculus (Mouse).